We begin with the raw amino-acid sequence, 205 residues long: Coatomer subunit zeta-2 (205 aa).

Basic and acidic residues predominate over residues 1 to 12; the sequence is MQRPEAWPRPHP. The disordered stretch occupies residues 1–33; it reads MQRPEAWPRPHPGEGASAAQAGGAAPPTRATEQ. A compositionally biased stretch (low complexity) spans 13–30; that stretch reads GEGASAAQAGGAAPPTRA.

This sequence belongs to the adaptor complexes small subunit family. As to quaternary structure, oligomeric complex.

The protein resides in the cytoplasm. It localises to the cytosol. Its subcellular location is the endoplasmic reticulum-Golgi intermediate compartment membrane. It is found in the golgi apparatus membrane. The protein localises to the cytoplasmic vesicle. The protein resides in the COPI-coated vesicle membrane. In terms of biological role, the coatomer is a cytosolic protein complex that binds to dilysine motifs and reversibly associates with Golgi non-clathrin-coated vesicles, which further mediate biosynthetic protein transport from the ER, via the Golgi up to the trans Golgi network. Coatomer complex is required for budding from Golgi membranes, and is essential for the retrograde Golgi-to-ER transport of dilysine-tagged proteins. The zeta subunit may be involved in regulating the coat assembly and, hence, the rate of biosynthetic protein transport due to its association-dissociation properties with the coatomer complex. This chain is Coatomer subunit zeta-2 (Copz2), found in Mus musculus (Mouse).